Here is a 164-residue protein sequence, read N- to C-terminus: UPF0114 protein Avin_40830 (164 aa).

The next 4 membrane-spanning stretches (helical) occupy residues 15–35 (LLAP…LKFF), 53–73 (LILV…LVMV), 103–125 (GSLK…LRVF), and 136–156 (LLWY…MSYL).

The protein belongs to the UPF0114 family.

It localises to the cell membrane. The protein is UPF0114 protein Avin_40830 of Azotobacter vinelandii (strain DJ / ATCC BAA-1303).